The chain runs to 538 residues: Eukaryotic translation initiation factor 3 subunit L (538 aa).

Positions Thr-305–His-513 constitute a PCI domain.

This sequence belongs to the eIF-3 subunit L family. Component of the eukaryotic translation initiation factor 3 (eIF-3) complex. The eIF-3 complex interacts with pix.

It is found in the cytoplasm. Its function is as follows. Component of the eukaryotic translation initiation factor 3 (eIF-3) complex, which is involved in protein synthesis of a specialized repertoire of mRNAs and, together with other initiation factors, stimulates binding of mRNA and methionyl-tRNAi to the 40S ribosome. The eIF-3 complex specifically targets and initiates translation of a subset of mRNAs involved in cell proliferation. The protein is Eukaryotic translation initiation factor 3 subunit L of Drosophila virilis (Fruit fly).